Reading from the N-terminus, the 461-residue chain is Putative dipeptidase CPSG_01350 (461 aa).

A compositionally biased stretch (basic and acidic residues) spans 1–10 (MSARDNEKGS). Residues 1–31 (MSARDNEKGSARSQPSHAAASEIENVPRPSR) are disordered. The chain crosses the membrane as a helical span at residues 35–52 (WTGTMIKVFIICACAGIV). Residues H90, D92, and E203 each coordinate Zn(2+). C142 and C232 are disulfide-bonded. Position 230 (H230) interacts with substrate. Zn(2+) is bound by residues H274 and H295. Positions 306 and 366 each coordinate substrate. N379 carries an N-linked (GlcNAc...) asparagine glycan.

It belongs to the metallo-dependent hydrolases superfamily. Peptidase M19 family. Zn(2+) is required as a cofactor.

It is found in the membrane. It carries out the reaction an L-aminoacyl-L-amino acid + H2O = 2 an L-alpha-amino acid. Functionally, hydrolyzes a wide range of dipeptides. This is Putative dipeptidase CPSG_01350 from Coccidioides posadasii (strain RMSCC 757 / Silveira) (Valley fever fungus).